A 239-amino-acid polypeptide reads, in one-letter code: Ribose-5-phosphate isomerase A (239 aa).

Residues 34 to 37 (TGST), 94 to 97 (DGAD), and 107 to 110 (KGGG) contribute to the substrate site. The active-site Proton acceptor is glutamate 116. Position 134 (lysine 134) interacts with substrate.

The protein belongs to the ribose 5-phosphate isomerase family. Homodimer.

It catalyses the reaction aldehydo-D-ribose 5-phosphate = D-ribulose 5-phosphate. It participates in carbohydrate degradation; pentose phosphate pathway; D-ribose 5-phosphate from D-ribulose 5-phosphate (non-oxidative stage): step 1/1. Catalyzes the reversible conversion of ribose-5-phosphate to ribulose 5-phosphate. The protein is Ribose-5-phosphate isomerase A of Treponema denticola (strain ATCC 35405 / DSM 14222 / CIP 103919 / JCM 8153 / KCTC 15104).